A 64-amino-acid chain; its full sequence is Large ribosomal subunit protein bL35 (64 aa).

It belongs to the bacterial ribosomal protein bL35 family.

The polypeptide is Large ribosomal subunit protein bL35 (Helicobacter hepaticus (strain ATCC 51449 / 3B1)).